Reading from the N-terminus, the 729-residue chain is Pentatricopeptide repeat-containing protein At4g04370 (729 aa).

17 PPR repeats span residues 10–44 (STKY…KLLP), 45–79 (DTFT…GFSS), 80–110 (DFYI…MRER), 111–145 (DVVH…GIKP), 178–208 (DIAV…MEQR), 209–243 (DMVS…GLRP), 244–278 (DQQT…GFDV), 279–309 (DMHL…IPNK), 310–344 (DVVC…GSDL), 345–379 (SSEA…GYTL), 380–414 (DTPA…DLVS), 415–445 (WNAI…TVQQ), 447–481 (DSFT…FIRP), 482–512 (CSLV…ISWK), 513–547 (DVVS…GMEP), 548–583 (NHVI…GVEP), and 584–618 (NHEH…PSID). The interval 619 to 694 (VLGIILDACR…LPGWSKIEMN (76 aa)) is type E motif. Residues 695-723 (GKTTTFFMNHTSHSDDTVSLLKLLSREMM) are type E(+) motif.

The protein belongs to the PPR family. PCMP-E subfamily.

The polypeptide is Pentatricopeptide repeat-containing protein At4g04370 (PCMP-E99) (Arabidopsis thaliana (Mouse-ear cress)).